We begin with the raw amino-acid sequence, 599 residues long: MATMVLPREEKLSQDEIVLGTKAVIQGLETLRGEHRALLAPLASHEAGEAEPGSQERCLLLRRSLEAIELGLGEAQVILALSSHLGAVESEKQKLRAQVRRLVQENQWLREELAGTQQKLQRSEQAVAQLEEEKQHLLFMSQIRKLDEMLPQEEKGDVPKDSLDDLFPNEDEQSPAPSPGGGDVAAQHGGYEIPARLRTLHNLVIQYASQGRYEVAVPLCKQALEDLEKTSGHDHPDVATMLNILALVYRDQNKYKDAAHLLNDALAIREKTLGKDHPAVAATLNNLAVLYGKRGKYKEAEPLCKRALEIREKVLGKFHPDVAKQLSNLALLCQNQGKAEEVEYYYRRALEIYATRLGPDDPNVAKTKNNLASCYLKQGKYQDAETLYKEILTRAHEKEFGSVNGENKPIWMHAEEREESKDKRRDRRPMEYGSWYKACKVDSPTVNTTLRTLGALYRPEGKLEAAHTLEDCASRSRKQGLDPASQTKVVELLKDGSGRGHRRGSRDVAGPQSESDLEESGPAAEWSGDGSGSLRRSGSFGKLRDALRRSSEMLVRKLQGGGPQEPNSRMKRASSLNFLNKSVEEPVQPGGRVFLTAAL.

Residues 78–143 are a coiled coil; that stretch reads ILALSSHLGA…KQHLLFMSQI (66 aa). The span at 154–163 shows a compositional bias: basic and acidic residues; sequence EKGDVPKDSL. Residues 154-188 form a disordered region; the sequence is EKGDVPKDSLDDLFPNEDEQSPAPSPGGGDVAAQH. Phosphoserine occurs at positions 174 and 178. 5 TPR repeats span residues 197–230, 239–272, 281–314, 323–356, and 365–398; these read LRTL…LEKT, ATML…REKT, AATL…REKV, AKQL…YATR, and AKTK…AHEK. S443 is subject to Phosphoserine. One copy of the TPR 6 repeat lies at 447–480; that stretch reads NTTLRTLGALYRPEGKLEAAHTLEDCASRSRKQG. Positions 492-541 are disordered; sequence LLKDGSGRGHRRGSRDVAGPQSESDLEESGPAAEWSGDGSGSLRRSGSFG. Phosphoserine occurs at positions 505 and 515. Residues 532–541 are compositionally biased toward low complexity; sequence GSLRRSGSFG. 3 positions are modified to phosphoserine: S574, S575, and S582.

The protein belongs to the kinesin light chain family. In terms of assembly, oligomeric complex composed of two heavy chains and two light chains. Interacts (via TPR repeats) with PLEKHM2.

Its subcellular location is the cytoplasm. The protein localises to the cytoskeleton. It localises to the lysosome membrane. Kinesin is a microtubule-associated force-producing protein that plays a role in organelle transport. The light chain functions in coupling of cargo to the heavy chain or in the modulation of its ATPase activity. Through binding with PLEKHM2 and ARL8B, recruits kinesin-1 to lysosomes and hence direct lysosomes movement toward microtubule plus ends. This is Kinesin light chain 2 from Mus musculus (Mouse).